Consider the following 730-residue polypeptide: Ribosomal RNA large subunit methyltransferase K/L (730 aa).

The 112-residue stretch at 46–157 (TAYRLCVWSR…RGEAILSLDL (112 aa)) folds into the THUMP domain. Residues 395 to 418 (ERREAQPEGTEVRQQAPQASEPAR) are disordered.

Belongs to the methyltransferase superfamily. RlmKL family.

The protein localises to the cytoplasm. It catalyses the reaction guanosine(2445) in 23S rRNA + S-adenosyl-L-methionine = N(2)-methylguanosine(2445) in 23S rRNA + S-adenosyl-L-homocysteine + H(+). It carries out the reaction guanosine(2069) in 23S rRNA + S-adenosyl-L-methionine = N(2)-methylguanosine(2069) in 23S rRNA + S-adenosyl-L-homocysteine + H(+). In terms of biological role, specifically methylates the guanine in position 2445 (m2G2445) and the guanine in position 2069 (m7G2069) of 23S rRNA. In Pseudomonas putida (strain GB-1), this protein is Ribosomal RNA large subunit methyltransferase K/L.